Reading from the N-terminus, the 652-residue chain is Apicoplast pyruvate carrier 2 (652 aa).

Topologically, residues 1–45 are cytoplasmic; it reads MSAFPASPQPSAFPASPQPSAFPASPQPSASPVSPRHCVSPSSGT. Residues 1–53 are disordered; sequence MSAFPASPQPSAFPASPQPSAFPASPQPSASPVSPRHCVSPSSGTLPSSSSPS. 12 consecutive transmembrane segments (helical) span residues 46-66, 126-146, 167-187, 189-209, 212-232, 278-298, 345-365, 385-405, 417-437, 445-465, 467-487, and 515-535; these read LPSS…SSSS, NLLP…AVSY, GTTL…SAWM, LGLA…IAYG, TALG…KLSP, LPYL…SSLN, LVDP…AERQ, SCSA…ICSS, LSWQ…LYPE, AAPA…PRAL, SASR…SLTG, and LWGY…MNAL. Residues 536 to 652 lie on the Cytoplasmic side of the membrane; sequence TAPCLFALST…LPYRFPTYSP (117 aa).

This sequence belongs to the major facilitator superfamily. Interacts with apicoplast pyruvate carrier 1.

The protein resides in the plastid. It is found in the apicoplast. The protein localises to the membrane. Its function is as follows. Along with apicoplast pyruvate carrier 1, forms apicoplast pyruvate carrier (APC) complex, which transports pyruvate into the apicoplast and may also transport amino acids like methionine, serine, glycine and tryptophan with low efficiency. Required for maintaining pyruvate-dependent metabolic activities in the apicoplast, such as synthesis of fatty acids, isopentenyl pyrophosphate (IPP), dimethylallyl pyrophosphate (DMAPP) and methylerythritol 4-phosphate (MEP). Required for maintaining the integrity of the apicoplast. Required for normal parasite growth. The protein is Apicoplast pyruvate carrier 2 of Toxoplasma gondii.